A 921-amino-acid polypeptide reads, in one-letter code: Protein translocase subunit SecA (921 aa).

Residues Q87, 105-109, and D516 each bind ATP; that span reads GEGKT. Zn(2+)-binding residues include C905, C907, C916, and H917.

The protein belongs to the SecA family. As to quaternary structure, monomer and homodimer. Part of the essential Sec protein translocation apparatus which comprises SecA, SecYEG and auxiliary proteins SecDF-YajC and YidC. Zn(2+) is required as a cofactor.

The protein resides in the cell inner membrane. Its subcellular location is the cytoplasm. The catalysed reaction is ATP + H2O + cellular proteinSide 1 = ADP + phosphate + cellular proteinSide 2.. In terms of biological role, part of the Sec protein translocase complex. Interacts with the SecYEG preprotein conducting channel. Has a central role in coupling the hydrolysis of ATP to the transfer of proteins into and across the cell membrane, serving both as a receptor for the preprotein-SecB complex and as an ATP-driven molecular motor driving the stepwise translocation of polypeptide chains across the membrane. The sequence is that of Protein translocase subunit SecA from Albidiferax ferrireducens (strain ATCC BAA-621 / DSM 15236 / T118) (Rhodoferax ferrireducens).